A 367-amino-acid polypeptide reads, in one-letter code: Histidinol-phosphate aminotransferase (367 aa).

K226 carries the N6-(pyridoxal phosphate)lysine modification.

Belongs to the class-II pyridoxal-phosphate-dependent aminotransferase family. Histidinol-phosphate aminotransferase subfamily. In terms of assembly, homodimer. It depends on pyridoxal 5'-phosphate as a cofactor.

The enzyme catalyses L-histidinol phosphate + 2-oxoglutarate = 3-(imidazol-4-yl)-2-oxopropyl phosphate + L-glutamate. It functions in the pathway amino-acid biosynthesis; L-histidine biosynthesis; L-histidine from 5-phospho-alpha-D-ribose 1-diphosphate: step 7/9. The polypeptide is Histidinol-phosphate aminotransferase (Aliarcobacter butzleri (strain RM4018) (Arcobacter butzleri)).